The sequence spans 406 residues: Nicotinate phosphoribosyltransferase (406 aa).

At His-225 the chain carries Phosphohistidine; by autocatalysis.

The protein belongs to the NAPRTase family. Transiently phosphorylated on a His residue during the reaction cycle. Phosphorylation strongly increases the affinity for substrates and increases the rate of nicotinate D-ribonucleotide production. Dephosphorylation regenerates the low-affinity form of the enzyme, leading to product release.

It carries out the reaction nicotinate + 5-phospho-alpha-D-ribose 1-diphosphate + ATP + H2O = nicotinate beta-D-ribonucleotide + ADP + phosphate + diphosphate. The protein operates within cofactor biosynthesis; NAD(+) biosynthesis; nicotinate D-ribonucleotide from nicotinate: step 1/1. Catalyzes the synthesis of beta-nicotinate D-ribonucleotide from nicotinate and 5-phospho-D-ribose 1-phosphate at the expense of ATP. This is Nicotinate phosphoribosyltransferase from Psychromonas ingrahamii (strain DSM 17664 / CCUG 51855 / 37).